The chain runs to 146 residues: Endoribonuclease YbeY (146 aa).

Positions 108, 112, and 118 each coordinate Zn(2+).

This sequence belongs to the endoribonuclease YbeY family. The cofactor is Zn(2+).

It localises to the cytoplasm. Single strand-specific metallo-endoribonuclease involved in late-stage 70S ribosome quality control and in maturation of the 3' terminus of the 16S rRNA. The sequence is that of Endoribonuclease YbeY from Onion yellows phytoplasma (strain OY-M).